The chain runs to 293 residues: MNPFWNMSSASVRKRSENDEKISTGDQKISPPRSSSAKKQLPPIPKNAVPITKPISPSLSVQSTNGTHASYGPFYLEYSLLAEFTLVVKQKLPGVYVQPSYRSALMWFGVIFIRHGLYQDGVFKFTVYIPDNYPDGECPRLVFDVPVFHPLVDPISGELDVKRAFTKWRRNHNHIWQVLMYARRIFYKIDTTSPLNPEAAVLYEKDVQLFKSKVVDSVKLCNSHLFDQPKIEDPYAIIFSPWNPVLHDDARERMLAQKKKSEEQSKGLHVSGLSWVKPGSVLPFSKEENSLQT.

The span at 1 to 11 (MNPFWNMSSAS) shows a compositional bias: polar residues. The interval 1–45 (MNPFWNMSSASVRKRSENDEKISTGDQKISPPRSSSAKKQLPPIP) is disordered. Positions 14–23 (KRSENDEKIS) are enriched in basic and acidic residues. Residues 24–38 (TGDQKISPPRSSSAK) show a composition bias toward polar residues. The UBC core domain occupies 75–223 (YLEYSLLAEF…VVDSVKLCNS (149 aa)). Basic and acidic residues predominate over residues 256 to 266 (AQKKKSEEQSK). Residues 256-293 (AQKKKSEEQSKGLHVSGLSWVKPGSVLPFSKEENSLQT) are disordered.

The protein belongs to the ubiquitin-conjugating enzyme family. FTS subfamily.

The protein resides in the cytoplasm. It is found in the cell membrane. In terms of biological role, may function to promote vesicle trafficking and/or fusion. May also regulate apoptosis. The protein is AKT-interacting protein homolog A (aktip-a) of Xenopus laevis (African clawed frog).